The following is a 552-amino-acid chain: Putative transport protein HSM_0534 (552 aa).

The next 5 membrane-spanning stretches (helical) occupy residues 4-24 (IAIT…IGHW), 28-48 (GVGL…HFMN), 67-87 (LILF…ASLL), 95-115 (GLAT…YKVV), and 157-177 (MAYA…MWLI). 2 consecutive RCK C-terminal domains span residues 190–275 (KQFQ…VIGE) and 277–360 (IDMP…IIGN). 6 consecutive transmembrane segments (helical) span residues 370-390 (MLPV…PFYI), 402-424 (AGGP…LYWF), 438-458 (IVLF…DTLV), 463-483 (LEWM…TGII), 495-515 (LCGL…ANAI), and 529-549 (VYPL…ILLW).

This sequence belongs to the AAE transporter (TC 2.A.81) family. YidE subfamily.

The protein localises to the cell membrane. The chain is Putative transport protein HSM_0534 from Histophilus somni (strain 2336) (Haemophilus somnus).